The following is a 412-amino-acid chain: DnaJ homolog subfamily A member 2 (412 aa).

The J domain maps to K8–G70. K39 is modified (N6-acetyllysine). Residues S78 and S123 each carry the phosphoserine modification. A CR-type zinc finger spans residues G130 to V214. K134 is covalently cross-linked (Glycyl lysine isopeptide (Lys-Gly) (interchain with G-Cter in SUMO2)). C143 and C146 together coordinate Zn(2+). Residues C143–G150 form a CXXCXGXG motif repeat. K152 bears the N6-acetyllysine mark. 6 residues coordinate Zn(2+): C159, C162, C186, C189, C202, and C205. CXXCXGXG motif repeat units lie at residues C159–G166, C186–G193, and C202–K209. Residues I365 to Q412 form a disordered region. Y391 carries the post-translational modification Phosphotyrosine. 2 positions are modified to phosphoserine: S394 and S395. C409 carries the cysteine methyl ester modification. The S-farnesyl cysteine moiety is linked to residue C409. A propeptide spans A410–Q412 (removed in mature form).

It is found in the membrane. Functionally, co-chaperone of Hsc70. Stimulates ATP hydrolysis and the folding of unfolded proteins mediated by HSPA1A/B (in vitro). The chain is DnaJ homolog subfamily A member 2 (Dnaja2) from Mus musculus (Mouse).